Here is a 447-residue protein sequence, read N- to C-terminus: Glycylpeptide N-tetradecanoyltransferase (447 aa).

Residues 38–41 (YKFW), 171–173 (LCV), and 179–183 (SKRLA) each bind tetradecanoyl-CoA. L447 (proton acceptor; via carboxylate) is an active-site residue.

Belongs to the NMT family. In terms of assembly, monomer.

The protein localises to the cytoplasm. It catalyses the reaction N-terminal glycyl-[protein] + tetradecanoyl-CoA = N-tetradecanoylglycyl-[protein] + CoA + H(+). Adds a myristoyl group to the N-terminal glycine residue of certain cellular proteins. This chain is Glycylpeptide N-tetradecanoyltransferase (NMT1), found in Kluyveromyces lactis (strain ATCC 8585 / CBS 2359 / DSM 70799 / NBRC 1267 / NRRL Y-1140 / WM37) (Yeast).